The chain runs to 687 residues: Mu-like prophage FluMu transposase A (687 aa).

The region spanning 8-74 is the HTH Mu-type domain; that stretch reads THYSVYELAN…ELLLKTTPEQ (67 aa). Positions 398–417 form a DNA-binding region, H-T-H motif; that stretch reads PIERAFSHGGLGDYVDKHLL.

Its function is as follows. This transposase is essential for integration, replication-transposition, and excision of Mu-like viral DNA. In Haemophilus influenzae (strain ATCC 51907 / DSM 11121 / KW20 / Rd), this protein is Mu-like prophage FluMu transposase A.